The sequence spans 500 residues: L-arabinose isomerase (500 aa).

Residues glutamate 306, glutamate 333, histidine 349, and histidine 448 each coordinate Mn(2+).

It belongs to the arabinose isomerase family. Mn(2+) serves as cofactor.

The enzyme catalyses beta-L-arabinopyranose = L-ribulose. Its pathway is carbohydrate degradation; L-arabinose degradation via L-ribulose; D-xylulose 5-phosphate from L-arabinose (bacterial route): step 1/3. In terms of biological role, catalyzes the conversion of L-arabinose to L-ribulose. This is L-arabinose isomerase from Shewanella sp. (strain MR-4).